The primary structure comprises 168 residues: Nascent polypeptide-associated complex subunit alpha (168 aa).

The 65-residue stretch at 14–78 (SKNEKKAREL…PKVDDFTRRL (65 aa)) folds into the NAC-A/B domain. Residues 83–129 (QQAASAAKDPQSIQADMAAAAAAPAAPAAPAAAPEEDEAGQVDESGL) are disordered. A compositionally biased stretch (low complexity) spans 100–115 (AAAAAAPAAPAAPAAA). In terms of domain architecture, UBA spans 129 to 168 (LDGQDIELVMQQANVSRNKAVKALREHNSDIVNAIMSLSK).

It belongs to the NAC-alpha family. In terms of assembly, part of the nascent polypeptide-associated complex (NAC), consisting of EGD2 and EGD1. NAC associates with ribosomes via EGD1.

Its subcellular location is the cytoplasm. The protein resides in the nucleus. Component of the nascent polypeptide-associated complex (NAC), a dynamic component of the ribosomal exit tunnel, protecting the emerging polypeptides from interaction with other cytoplasmic proteins to ensure appropriate nascent protein targeting. The NAC complex also promotes mitochondrial protein import by enhancing productive ribosome interactions with the outer mitochondrial membrane and blocks the inappropriate interaction of ribosomes translating non-secretory nascent polypeptides with translocation sites in the membrane of the endoplasmic reticulum. EGD2 may also be involved in transcription regulation. In Eremothecium gossypii (strain ATCC 10895 / CBS 109.51 / FGSC 9923 / NRRL Y-1056) (Yeast), this protein is Nascent polypeptide-associated complex subunit alpha (EGD2).